Here is a 364-residue protein sequence, read N- to C-terminus: uncharacterized protein (364 aa).

A compositionally biased stretch (acidic residues) spans 1-17 (MEPGELMEVDTSQELDE). The segment at 1 to 61 (MEPGELMEVD…EEDQSSTETM (61 aa)) is disordered. Residues 19–31 (TSAKETDQPKDAQ) are compositionally biased toward basic and acidic residues.

This is an uncharacterized protein from Caenorhabditis elegans.